The following is a 158-amino-acid chain: Transcription elongation factor GreA (158 aa).

The stretch at 14 to 76 (VKKLEEELEY…QIENMLKNAN (63 aa)) forms a coiled coil.

Belongs to the GreA/GreB family.

Necessary for efficient RNA polymerase transcription elongation past template-encoded arresting sites. The arresting sites in DNA have the property of trapping a certain fraction of elongating RNA polymerases that pass through, resulting in locked ternary complexes. Cleavage of the nascent transcript by cleavage factors such as GreA or GreB allows the resumption of elongation from the new 3'terminus. GreA releases sequences of 2 to 3 nucleotides. In Clostridium acetobutylicum (strain ATCC 824 / DSM 792 / JCM 1419 / IAM 19013 / LMG 5710 / NBRC 13948 / NRRL B-527 / VKM B-1787 / 2291 / W), this protein is Transcription elongation factor GreA.